The sequence spans 434 residues: Putative D-alanyl-D-alanine carboxypeptidase (434 aa).

The helical; Signal-anchor transmembrane segment at 7–25 (YLSLLAVSCSVSAAKYPVL) threads the bilayer.

Belongs to the peptidase S12 family. YfeW subfamily.

The protein localises to the cell inner membrane. The enzyme catalyses Preferential cleavage: (Ac)2-L-Lys-D-Ala-|-D-Ala. Also transpeptidation of peptidyl-alanyl moieties that are N-acyl substituents of D-alanine.. The chain is Putative D-alanyl-D-alanine carboxypeptidase from Escherichia coli O157:H7.